The primary structure comprises 121 residues: MARIAGVNIPNHQHTVIGLTAIFGIGTTRANKICQTTGVAIDKKVKDLTDADLEKLRDEVGKFITEGDLRREVTMSIKRLMDLGCYRGVRHRKGLPVRGQRTKTNARTRKGPRKSGVQLKK.

The interval 92–121 (RKGLPVRGQRTKTNARTRKGPRKSGVQLKK) is disordered.

The protein belongs to the universal ribosomal protein uS13 family. As to quaternary structure, part of the 30S ribosomal subunit. Forms a loose heterodimer with protein S19. Forms two bridges to the 50S subunit in the 70S ribosome.

Functionally, located at the top of the head of the 30S subunit, it contacts several helices of the 16S rRNA. In the 70S ribosome it contacts the 23S rRNA (bridge B1a) and protein L5 of the 50S subunit (bridge B1b), connecting the 2 subunits; these bridges are implicated in subunit movement. Contacts the tRNAs in the A and P-sites. This is Small ribosomal subunit protein uS13 from Polynucleobacter asymbioticus (strain DSM 18221 / CIP 109841 / QLW-P1DMWA-1) (Polynucleobacter necessarius subsp. asymbioticus).